The sequence spans 894 residues: Probable cytoplasmic aconitate hydratase (894 aa).

Substrate contacts are provided by residues glutamine 87 and 207-209; that span reads DSH. The [4Fe-4S] cluster site is built by cysteine 438, cysteine 504, and cysteine 507. Substrate contacts are provided by residues arginine 537, arginine 542, and 781-782; that span reads SR.

This sequence belongs to the aconitase/IPM isomerase family. [4Fe-4S] cluster serves as cofactor.

It is found in the cytoplasm. Its subcellular location is the cytosol. The enzyme catalyses citrate = D-threo-isocitrate. In terms of biological role, catalyzes the isomerization of citrate to isocitrate via cis-aconitate. The chain is Probable cytoplasmic aconitate hydratase (aco1) from Dictyostelium discoideum (Social amoeba).